The following is a 165-amino-acid chain: UPF0254 protein MmarC6_1720 (165 aa).

It belongs to the UPF0254 family.

This Methanococcus maripaludis (strain C6 / ATCC BAA-1332) protein is UPF0254 protein MmarC6_1720.